We begin with the raw amino-acid sequence, 543 residues long: Tapetal oleosin GRP-17 (543 aa).

The interval 1 to 67 (MSEELSQKPS…FLMPLLEVIK (67 aa)) is polar. The next 3 membrane-spanning stretches (helical) occupy residues 68 to 88 (IIIA…TLAG), 98 to 118 (PVFI…VVLA), and 119 to 139 (TGFT…MWLV). A hydrophobic region spans residues 68–162 (IIIASVASVI…PAGLPPNSGA (95 aa)). Disordered stretches follow at residues 148–169 (KDNP…GAQS) and 195–543 (GGKK…HMAE). Positions 201–212 (SGGGKSKFGGKG) are enriched in gly residues. Tandem repeats lie at residues 220–223 (GMSS), 227–230 (GMSG), and 234–237 (GMSG). Positions 220–229 (GMSSGDEGMS) are enriched in low complexity. The segment at 220–514 (GMSSGDEGMS…GGMSESGMSG (295 aa)) is 29 X 4 AA approximate tandem repeats of G-M-S-G. Positions 230 to 240 (GSEGGMSGGEG) are enriched in gly residues. The segment covering 244-256 (KSGKGKLKAKLEK) has biased composition (basic residues). 26 consecutive repeat copies span residues 259 to 262 (GMSG), 269 to 272 (GMSG), 276 to 279 (GMSG), 301 to 304 (GMSG), 305 to 308 (GMSG), 312 to 315 (GMSG), 319 to 322 (GMSS), 344 to 347 (SMSG), 348 to 351 (GMSG), 355 to 358 (GMSG), 362 to 365 (GMSG), 387 to 390 (CMSG), 391 to 394 (GMSG), 398 to 401 (GMSR), 405 to 408 (GISG), 410 to 413 (GMSG), 414 to 417 (GSGS), 438 to 441 (GMSG), 445 to 448 (GMSG), 458 to 461 (GSMS), 464 to 467 (GMSG), 468 to 471 (GSGS), 492 to 495 (GMSG), 499 to 502 (GMSG), 506 to 509 (GMSE), and 511 to 514 (GMSG). Over residues 272–283 (GSEGGMSGGGGS) the composition is skewed to gly residues. Residues 285–301 (SKSKKSKLKAKLGKKKG) are compositionally biased toward basic residues. Residues 315–326 (GSEGGMSSGGGS) are compositionally biased toward gly residues. Residues 328–344 (SKSKKSKLKAKLGKKKS) are compositionally biased toward basic residues. Positions 345–357 (MSGGMSGSEEGMS) are enriched in low complexity. The span at 358–370 (GSEGGMSGGGGGK) shows a compositional bias: gly residues. Basic residues predominate over residues 371–387 (SKSRKSKLKANLGKKKC). 2 stretches are compositionally biased toward gly residues: residues 405-416 (GISGGGMSGGSG) and 440-470 (SGSG…GGSG). The span at 471–492 (SKHKIGGGKHGGLRGKFGKKRG) shows a compositional bias: basic residues. Positions 495 to 505 (GSEGGMSGSEG) are enriched in gly residues. A compositionally biased stretch (basic residues) spans 518–531 (GKHKIGGGKHKFGG). Gly residues predominate over residues 532-543 (GKHGGGGGHMAE).

The protein belongs to the oleosin family. Proteolytically cleaved following anther tapetal breakdown. In terms of tissue distribution, flower specific, especially in anther tapetum, pollen (at protein level) and flowers florets.

It is found in the secreted. The protein resides in the extracellular space. It localises to the extracellular matrix. Its subcellular location is the pollen coat. The protein localises to the lipid droplet. It is found in the membrane. Lipid-binding oleosin pollen coat protein required to mediate pollen recognition by stigma cells and subsequent pollen hydration. Involved in anther tapetum development, especially for the physiology of tapetosomes. Also implicated in the formation of pollen coat. The chain is Tapetal oleosin GRP-17 from Arabidopsis thaliana (Mouse-ear cress).